A 178-amino-acid polypeptide reads, in one-letter code: Large ribosomal subunit protein uL6 (178 aa).

The protein belongs to the universal ribosomal protein uL6 family. In terms of assembly, part of the 50S ribosomal subunit.

In terms of biological role, this protein binds to the 23S rRNA, and is important in its secondary structure. It is located near the subunit interface in the base of the L7/L12 stalk, and near the tRNA binding site of the peptidyltransferase center. The chain is Large ribosomal subunit protein uL6 from Frankia alni (strain DSM 45986 / CECT 9034 / ACN14a).